Consider the following 461-residue polypeptide: GTPase Der (461 aa).

EngA-type G domains lie at 2–164 (QKII…EDDV) and 197–368 (IRVG…KNFT). GTP-binding positions include 8–15 (GKPNVGKS), 55–59 (DSGGL), 116–119 (NKID), 203–210 (GRVNVGKS), 250–254 (DTAGI), and 314–317 (NKWD). Positions 369-453 (QKIQTSKLNE…PIVLAPKKRG (85 aa)) constitute a KH-like domain.

The protein belongs to the TRAFAC class TrmE-Era-EngA-EngB-Septin-like GTPase superfamily. EngA (Der) GTPase family. In terms of assembly, associates with the 50S ribosomal subunit.

GTPase that plays an essential role in the late steps of ribosome biogenesis. The protein is GTPase Der of Campylobacter curvus (strain 525.92).